The chain runs to 30 residues: Cyclotide mden-E (30 aa).

The segment at residues 1 to 30 (GIPCGESCVYIPCITAAIGCSCKSKVCYRN) is a cross-link (cyclopeptide (Gly-Asn)). 3 disulfides stabilise this stretch: cysteine 4–cysteine 20, cysteine 8–cysteine 22, and cysteine 13–cysteine 27.

It belongs to the cyclotide family. Bracelet subfamily. This is a cyclic peptide.

Probably participates in a plant defense mechanism. This chain is Cyclotide mden-E, found in Melicytus dentatus (Tree violet).